A 312-amino-acid chain; its full sequence is Porphobilinogen deaminase (312 aa).

Residue C241 is modified to S-(dipyrrolylmethanemethyl)cysteine.

Belongs to the HMBS family. As to quaternary structure, monomer. Requires dipyrromethane as cofactor.

The catalysed reaction is 4 porphobilinogen + H2O = hydroxymethylbilane + 4 NH4(+). Its pathway is porphyrin-containing compound metabolism; protoporphyrin-IX biosynthesis; coproporphyrinogen-III from 5-aminolevulinate: step 2/4. Its function is as follows. Tetrapolymerization of the monopyrrole PBG into the hydroxymethylbilane pre-uroporphyrinogen in several discrete steps. This chain is Porphobilinogen deaminase, found in Pelotomaculum thermopropionicum (strain DSM 13744 / JCM 10971 / SI).